A 278-amino-acid chain; its full sequence is MANYTAADIKALRERTGAGMMDVKKALDEANGDAEKAIEIIRIKGLKGATKREGRSTAEGLVAAKVNGGVGVMIEVNCETDFVAKADKFIQLADKVLNVAVESGAADLETLLATEVDGKPLSEVVVEEGAVLGEKVVVRRISRVEGTTVDAYLHKTSKDLPAQVGVLFAVDGEGEAAATAAHDIAVHVAAMAPNYLTREDVPAELVESERRIAEETAKAEGKPEAALSKIVEGRVTGFYKGEVLVDQAFAKDSKKTVAQVLEEAGVKATAVTRFRVGN.

An involved in Mg(2+) ion dislocation from EF-Tu region spans residues 80–83 (TDFV).

This sequence belongs to the EF-Ts family.

It localises to the cytoplasm. Functionally, associates with the EF-Tu.GDP complex and induces the exchange of GDP to GTP. It remains bound to the aminoacyl-tRNA.EF-Tu.GTP complex up to the GTP hydrolysis stage on the ribosome. In Paenarthrobacter aurescens (strain TC1), this protein is Elongation factor Ts.